A 112-amino-acid chain; its full sequence is Putative membrane protein insertion efficiency factor (112 aa).

This sequence belongs to the UPF0161 family.

Its subcellular location is the cell inner membrane. In terms of biological role, could be involved in insertion of integral membrane proteins into the membrane. The protein is Putative membrane protein insertion efficiency factor of Bradyrhizobium diazoefficiens (strain JCM 10833 / BCRC 13528 / IAM 13628 / NBRC 14792 / USDA 110).